Reading from the N-terminus, the 358-residue chain is S-adenosylmethionine:tRNA ribosyltransferase-isomerase (358 aa).

It belongs to the QueA family. Monomer.

It is found in the cytoplasm. The catalysed reaction is 7-aminomethyl-7-carbaguanosine(34) in tRNA + S-adenosyl-L-methionine = epoxyqueuosine(34) in tRNA + adenine + L-methionine + 2 H(+). Its pathway is tRNA modification; tRNA-queuosine biosynthesis. In terms of biological role, transfers and isomerizes the ribose moiety from AdoMet to the 7-aminomethyl group of 7-deazaguanine (preQ1-tRNA) to give epoxyqueuosine (oQ-tRNA). In Desulfotalea psychrophila (strain LSv54 / DSM 12343), this protein is S-adenosylmethionine:tRNA ribosyltransferase-isomerase.